The sequence spans 281 residues: 2-dehydro-3-deoxyphosphooctonate aldolase (281 aa).

Belongs to the KdsA family.

The protein resides in the cytoplasm. It carries out the reaction D-arabinose 5-phosphate + phosphoenolpyruvate + H2O = 3-deoxy-alpha-D-manno-2-octulosonate-8-phosphate + phosphate. It participates in carbohydrate biosynthesis; 3-deoxy-D-manno-octulosonate biosynthesis; 3-deoxy-D-manno-octulosonate from D-ribulose 5-phosphate: step 2/3. It functions in the pathway bacterial outer membrane biogenesis; lipopolysaccharide biosynthesis. This is 2-dehydro-3-deoxyphosphooctonate aldolase from Pseudomonas syringae pv. tomato (strain ATCC BAA-871 / DC3000).